A 208-amino-acid polypeptide reads, in one-letter code: uncharacterized protein (208 aa).

Positions 1–18 (MSPTKDSHPSPHFPRDSG) are enriched in basic and acidic residues. Disordered stretches follow at residues 1–122 (MSPT…LPPP) and 135–208 (RECH…TPDG).

This is an uncharacterized protein from Homo sapiens (Human).